The chain runs to 246 residues: tRNA (guanine-N(1)-)-methyltransferase (246 aa).

S-adenosyl-L-methionine-binding positions include glycine 112 and 131-136 (IGDYVL).

This sequence belongs to the RNA methyltransferase TrmD family. In terms of assembly, homodimer.

It is found in the cytoplasm. The catalysed reaction is guanosine(37) in tRNA + S-adenosyl-L-methionine = N(1)-methylguanosine(37) in tRNA + S-adenosyl-L-homocysteine + H(+). Its function is as follows. Specifically methylates guanosine-37 in various tRNAs. The protein is tRNA (guanine-N(1)-)-methyltransferase of Thermosipho melanesiensis (strain DSM 12029 / CIP 104789 / BI429).